Here is a 490-residue protein sequence, read N- to C-terminus: Ribulose bisphosphate carboxylase large chain (490 aa).

Residues N127 and T177 each coordinate substrate. K179 (proton acceptor) is an active-site residue. Residue K181 participates in substrate binding. Positions 205, 207, and 208 each coordinate Mg(2+). The residue at position 205 (K205) is an N6-carboxylysine. Residue H297 is the Proton acceptor of the active site. Residues R298, H330, and S382 each contribute to the substrate site.

This sequence belongs to the RuBisCO large chain family. Type I subfamily. Heterohexadecamer of 8 large chains and 8 small chains. Mg(2+) is required as a cofactor.

The protein resides in the plastid. It localises to the chloroplast. It catalyses the reaction 2 (2R)-3-phosphoglycerate + 2 H(+) = D-ribulose 1,5-bisphosphate + CO2 + H2O. The enzyme catalyses D-ribulose 1,5-bisphosphate + O2 = 2-phosphoglycolate + (2R)-3-phosphoglycerate + 2 H(+). Functionally, ruBisCO catalyzes two reactions: the carboxylation of D-ribulose 1,5-bisphosphate, the primary event in carbon dioxide fixation, as well as the oxidative fragmentation of the pentose substrate in the photorespiration process. Both reactions occur simultaneously and in competition at the same active site. The sequence is that of Ribulose bisphosphate carboxylase large chain from Thalassiosira pseudonana (Marine diatom).